The following is a 303-amino-acid chain: HTH-type transcriptional regulator CatM (303 aa).

The region spanning 1–58 (MELRHLRYFVTVVEEQSISKAAEKLCIAQPPLSRQIQKLEEELGIQLFERGFRPAKVT) is the HTH lysR-type domain. Positions 18–37 (ISKAAEKLCIAQPPLSRQIQ) form a DNA-binding region, H-T-H motif. Residues Ser-99 and Thr-128 each contribute to the cis,cis-muconate site.

This sequence belongs to the LysR transcriptional regulatory family. As to quaternary structure, homotetramer in solution.

Its function is as follows. Positively regulates the expression of catA, catBCIJFD and benPK in response to cis,cis-muconate. It binds to the catB-catM intercistronic region, to a specific sequence upstream of catA and to the benPK promoter region. Can also repress pca genes. This chain is HTH-type transcriptional regulator CatM (catM), found in Acinetobacter baylyi (strain ATCC 33305 / BD413 / ADP1).